The sequence spans 906 residues: ATP-dependent DNA helicase PIF1 (906 aa).

2 disordered regions span residues 77–146 (DSEI…SSTF) and 229–297 (LEGS…PFKV). A compositionally biased stretch (basic and acidic residues) spans 78–87 (SEIKESDDLS). The span at 88-119 (KGQSHVYNGSPVTKNSILQIEKQQIQKSPRPT) shows a compositional bias: polar residues. Positions 120 to 132 (ETNKRMQIRKDPD) are enriched in basic and acidic residues. Residues 234–261 (NKVQADNASPFRITSSFSSPSQIQNQGV) are compositionally biased toward polar residues. The span at 273-291 (QNVSSASQSSSPPMTVSQV) shows a compositional bias: low complexity. 390–397 (GSAGTGKS) contributes to the ATP binding site. The DNA-binding element occupies 840–859 (QAYVALSRAVSRAGLQVLNF).

This sequence belongs to the helicase family. PIF1 subfamily. Monomer. Interacts with telomerase. Mg(2+) is required as a cofactor.

The protein resides in the nucleus. The protein localises to the mitochondrion. It catalyses the reaction Couples ATP hydrolysis with the unwinding of duplex DNA at the replication fork by translocating in the 5'-3' direction. This creates two antiparallel DNA single strands (ssDNA). The leading ssDNA polymer is the template for DNA polymerase III holoenzyme which synthesizes a continuous strand.. The catalysed reaction is ATP + H2O = ADP + phosphate + H(+). Its function is as follows. DNA-dependent ATPase and 5'-3' DNA helicase required for the maintenance of both mitochondrial and nuclear genome stability. Efficiently unwinds G-quadruplex (G4) DNA structures and forked RNA-DNA hybrids. Resolves G4 structures, preventing replication pausing and double-strand breaks (DSBs) at G4 motifs. Involved in the maintenance of telomeric DNA. Inhibits telomere elongation, de novo telomere formation and telomere addition to DSBs via catalytic inhibition of telomerase. Reduces the processivity of telomerase by displacing active telomerase from DNA ends. Releases telomerase by unwinding the short telomerase RNA/telomeric DNA hybrid that is the intermediate in the telomerase reaction. Involved in the maintenance of ribosomal (rDNA). Required for efficient fork arrest at the replication fork barrier within rDNA. Involved in the maintenance of mitochondrial (mtDNA). Required to maintain mtDNA under conditions that introduce dsDNA breaks in mtDNA, either preventing or repairing dsDNA breaks. May inhibit replication progression to allow time for repair. May have a general role in chromosomal replication by affecting Okazaki fragment maturation. May have a role in conjunction with DNA2 helicase/nuclease in 5'-flap extension during Okazaki fragment processing. This chain is ATP-dependent DNA helicase PIF1, found in Candida albicans (strain SC5314 / ATCC MYA-2876) (Yeast).